A 419-amino-acid polypeptide reads, in one-letter code: Dual specificity protein phosphatase 7 (419 aa).

The interval 1–47 (MKNQLRGPPARAHMSTSGAAAAGGTRAGSEPGAGSGSGAGTGAGAAT) is disordered. Over residues 10 to 29 (ARAHMSTSGAAAAGGTRAGS) the composition is skewed to low complexity. A compositionally biased stretch (gly residues) spans 31–47 (PGAGSGSGAGTGAGAAT). In terms of domain architecture, Rhodanese spans 68–187 (GGASLLLLDC…FQTEYSEHCE (120 aa)). A disordered region spans residues 216-240 (CSDGESDRELPSSATESDGSPVPSS). Over residues 227–240 (SSATESDGSPVPSS) the composition is skewed to polar residues. The region spanning 244–387 (FPVQILPYLY…LLDFERTLGL (144 aa)) is the Tyrosine-protein phosphatase domain. Residue Cys331 is the Phosphocysteine intermediate of the active site. 331–337 (CLAGISR) is a binding site for substrate.

The protein belongs to the protein-tyrosine phosphatase family. Non-receptor class dual specificity subfamily. As to quaternary structure, interacts with MAPK1/ERK2; the interaction enhances DUSP7 phosphatase activity. Strongly expressed in liver. Expressed at significantly higher levels in malignant hematopoietic cells than in corresponding non-malignant cells.

The protein localises to the cytoplasm. It carries out the reaction O-phospho-L-tyrosyl-[protein] + H2O = L-tyrosyl-[protein] + phosphate. It catalyses the reaction O-phospho-L-seryl-[protein] + H2O = L-seryl-[protein] + phosphate. The enzyme catalyses O-phospho-L-threonyl-[protein] + H2O = L-threonyl-[protein] + phosphate. With respect to regulation, strongly inhibited by sodium orthovanadate. In terms of biological role, dual specificity protein phosphatase. Shows high activity towards MAPK1/ERK2. Also has lower activity towards MAPK14 and MAPK8. In arrested oocytes, plays a role in meiotic resumption. Promotes nuclear envelope breakdown and activation of the CDK1/Cyclin-B complex in oocytes, probably by dephosphorylating and inactivating the conventional protein kinase C (cPKC) isozyme PRKCB. May also inactivate PRKCA and/or PRKCG. Also important in oocytes for normal chromosome alignment on the metaphase plate and progression to anaphase, where it might regulate activity of the spindle-assembly checkpoint (SAC) complex. The sequence is that of Dual specificity protein phosphatase 7 from Homo sapiens (Human).